The primary structure comprises 248 residues: Probable transcriptional regulatory protein Mnod_7401 (248 aa).

This sequence belongs to the TACO1 family.

The protein resides in the cytoplasm. The protein is Probable transcriptional regulatory protein Mnod_7401 of Methylobacterium nodulans (strain LMG 21967 / CNCM I-2342 / ORS 2060).